We begin with the raw amino-acid sequence, 281 residues long: Plasmanylethanolamine desaturase (281 aa).

Residues 1–28 (MKTQEIEKKVRQQDAQVLAQGYSPAIRA) are Cytoplasmic-facing. A helical transmembrane segment spans residues 29 to 45 (MEIAAIVSFVSLEVALV). The Periplasmic segment spans residues 46–58 (YRLWGTPYAGTWL). A helical membrane pass occupies residues 59 to 75 (LLSAVLLGYLAADFVSG). Over 76-123 (FVHWMGDTWGSTEMPVLGKALIRPFREHHVDEKAITRHDFVETNGNNC) the chain is Cytoplasmic. The helical transmembrane segment at 124–138 (LISLPVAIIALCLPM) threads the bilayer. Topologically, residues 139-142 (SGPG) are periplasmic. Residues 143 to 159 (WVFCASFLGAMIFWVMA) traverse the membrane as a helical segment. At 160 to 281 (TNQFHKWSHM…VQEKPASTRP (122 aa)) the chain is on the cytoplasmic side. A Histidine box-1 motif is present at residues 164–168 (HKWSH). Positions 191–195 (HRIHH) match the Histidine box-2 motif.

The protein belongs to the fatty acid desaturase CarF family. As to quaternary structure, interacts with CarR.

It localises to the cell inner membrane. It catalyses the reaction a 1-(1,2-saturated alkyl)-2-acyl-sn-glycero-3-phosphoethanolamine + 2 Fe(II)-[cytochrome b5] + O2 + 2 H(+) = a 1-O-(1Z-alkenyl)-2-acyl-sn-glycero-3-phosphoethanolamine + 2 Fe(III)-[cytochrome b5] + 2 H2O. It carries out the reaction 1-O-(13-methyltetradecyl)-2-(13-methyltetradecanoyl)-sn-glycero-3-phosphoethanolamine + 2 Fe(II)-[cytochrome b5] + O2 + 2 H(+) = 1-O-(1Z-13-methyltetradecenyl)-2-(13-methyltetradecanoyl)-sn-glycero-3-phosphoethanolamine + 2 Fe(III)-[cytochrome b5] + 2 H2O. Its function is as follows. Plasmanylethanolamine desaturase involved in plasmalogen biogenesis in the membrane, required for light-induced carotenogenesis. Plasmalogens are glycerophospholipids with a hydrocarbon chain linked by a vinyl ether bond at the glycerol sn-1 position, and are involved in antioxidative and signaling mechanisms, most precisely in sensing photooxidative stress through singlet oxygen. Participates in the light-dependent inactivation of the antisigma factor CarR. Mediates signaling by singlet oxygen, generated via photoexcited protoporphyrin IX. This is Plasmanylethanolamine desaturase from Myxococcus xanthus.